The following is an 875-amino-acid chain: MDEEEDNLSLLTALLEENESALDCNSEENNFLTRENGEPDAFDELFDADGDGESYTEEADDGETGETRDEKENLATLFGDMEDLTDEEEVPASQSTENRVLPAPAPRREKTNEELQEELRNLQEQMKALQEQLKVTTIKQTASPARLQKSPVEKSPRPPLKERRVQRIQESTCFSAELDVPALPRTKRVARTPKASPPDPKSSSSRMTSAPSQPLQTISRNKPSGITRGQIVGTPGSSGETTQPICVEAFSGLRLRRPRVSSTEMNKKMTGRKLIRLSQIKEKMAREKLEEIDWVTFGVILKKVTPQSVNSGKTFSIWKLNDLRDLTQCVSLFLFGEVHKALWKTEQGTVVGILNANPMKPKDGSEEVCLSIDHPQKVLIMGEALDLGTCKAKKKNGEPCTQTVNLRDCEYCQYHVQAQYKKLSAKRADLQSTFSGGRIPKKFARRGTSLKERLCQDGFYYGGVSSASYAASIAAAVAPKKKIQTTLSNLVVKGTNLIIQETRQKLGIPQKSLSCSEEFKELMDLPTCGARNLKQHLAKATASGIMGSPKPAIKSISASALLKQQKQRMLEMRRRKSEEIQKRFLQSSSEVESPAVPSSSRQPPAQPPRTGSEFPRLEGAPATMTPKLGRGVLEGDDVLFYDESPPPRPKLSALAEAKKLAAITKLRAKGQVLTKTNPNSIKKKQKDPQDILEVKERVEKNTMFSSQAEDELEPARKKRREQLAYLESEEFQKILKAKSKHTGILKEAEAEMQERYFEPLVKKEQMEEKMRNIREVKCRVVTCKTCAYTHFKLLETCVSEQHEYHWHDGVKRFFKCPCGNRSISLDRLPNKHCSNCGLYKWERDGMLKEKTGPKIGGETLLPRGEEHAKFLNSLK.

The segment at 1–156 is N-terminal domain; the sequence is MDEEEDNLSL…LQKSPVEKSP (156 aa). 3 disordered regions span residues 31 to 120, 137 to 167, and 179 to 228; these read FLTR…EELR, TIKQ…RVQR, and DVPA…GITR. Composition is skewed to acidic residues over residues 38-64 and 80-90; these read EPDA…DGET and DMEDLTDEEEV. Threonine 85 is modified (phosphothreonine). Serine 93 carries the post-translational modification Phosphoserine. A coiled-coil region spans residues 104–142; that stretch reads PAPRREKTNEELQEELRNLQEQMKALQEQLKVTTIKQTA. 2 stretches are compositionally biased toward basic and acidic residues: residues 106–120 and 151–167; these read PRRE…EELR and PVEK…RVQR. Polar residues predominate over residues 206–224; that stretch reads RMTSAPSQPLQTISRNKPS. The segment at 238–389 is OB-fold domain; that stretch reads SGETTQPICV…IMGEALDLGT (152 aa). A zinc finger-like 1 region spans residues 390–415; sequence CKAKKKNGEPCTQTVNLRDCEYCQYH. Lysine 493 is covalently cross-linked (Glycyl lysine isopeptide (Lys-Gly) (interchain with G-Cter in SUMO2)). A disordered region spans residues 567–630; that stretch reads QRMLEMRRRK…PATMTPKLGR (64 aa). Residues 568–582 are compositionally biased toward basic and acidic residues; it reads RMLEMRRRKSEEIQK. Residues 587-603 show a composition bias toward low complexity; sequence SSSEVESPAVPSSSRQP. A Glycyl lysine isopeptide (Lys-Gly) (interchain with G-Cter in SUMO2) cross-link involves residue lysine 627. The residue at position 644 (serine 644) is a Phosphoserine. Residues lysine 762 and lysine 763 each participate in a glycyl lysine isopeptide (Lys-Gly) (interchain with G-Cter in SUMO2) cross-link. 2 zinc finger-like regions span residues 783 to 802 and 816 to 836; these read CKTC…SEQH and CPCG…CSNC.

The protein belongs to the MCM10 family. As to quaternary structure, self-associates. Interacts with ORC2. May interact with MCM2 and MCM6. Interacts with the DNA polymerase alpha subunit POLA1. Interacts with RECQL4; this interaction regulates RECQL4 unwinding activity. Interacts with WDHD1.

It localises to the nucleus. In terms of biological role, acts as a replication initiation factor that brings together the MCM2-7 helicase and the DNA polymerase alpha/primase complex in order to initiate DNA replication. Additionally, plays a role in preventing DNA damage during replication. Key effector of the RBBP6 and ZBTB38-mediated regulation of DNA-replication and common fragile sites stability; acts as a direct target of transcriptional repression by ZBTB38. In Homo sapiens (Human), this protein is Protein MCM10 homolog (MCM10).